Reading from the N-terminus, the 230-residue chain is MRKLSRRQNENLKKIKNVVHSSLEEAITLLQDTATAKFIESVELHANLNIDTKYADQQLRTTVTLPHGIGKSMRIAVLTNEANFNEANEGGADIVGSQELIDDISQGNLNFDLLVATPDMMPKLAKLGRVLGPKGLMPSPKSGTVSTNLTETLSDFKKGKFEYKADKTGVVHVNFGKANFSKDQLMENLTSLYQSIEQNRPSGVKGKYFKSLFICTSMGPSIQLDLNTFD.

Belongs to the universal ribosomal protein uL1 family. In terms of assembly, part of the 50S ribosomal subunit.

Its subcellular location is the plastid. It is found in the chloroplast. Its function is as follows. Binds directly to 23S rRNA. Might be involved in E site tRNA release (Potential). This chain is Large ribosomal subunit protein uL1c (rpl1), found in Thalassiosira pseudonana (Marine diatom).